Here is a 417-residue protein sequence, read N- to C-terminus: Putative competence-damage inducible protein (417 aa).

It belongs to the CinA family.

This is Putative competence-damage inducible protein from Leuconostoc citreum (strain KM20).